The sequence spans 483 residues: Altronate oxidoreductase (483 aa).

NAD(+) is bound at residue I18 to A29.

Belongs to the mannitol dehydrogenase family. UxaB subfamily.

It carries out the reaction D-altronate + NAD(+) = keto-D-tagaturonate + NADH + H(+). It participates in carbohydrate metabolism; pentose and glucuronate interconversion. The sequence is that of Altronate oxidoreductase from Cronobacter sakazakii (strain ATCC BAA-894) (Enterobacter sakazakii).